Consider the following 344-residue polypeptide: Protein RecA (344 aa).

Residue 65 to 72 participates in ATP binding; sequence GPESSGKT. The segment covering 323–337 has biased composition (basic and acidic residues); it reads ELREKFQPAEAPREA. The disordered stretch occupies residues 323–344; sequence ELREKFQPAEAPREAGDDEDKE.

This sequence belongs to the RecA family.

The protein localises to the cytoplasm. Can catalyze the hydrolysis of ATP in the presence of single-stranded DNA, the ATP-dependent uptake of single-stranded DNA by duplex DNA, and the ATP-dependent hybridization of homologous single-stranded DNAs. It interacts with LexA causing its activation and leading to its autocatalytic cleavage. The chain is Protein RecA from Xanthomonas euvesicatoria pv. vesicatoria (strain 85-10) (Xanthomonas campestris pv. vesicatoria).